A 307-amino-acid polypeptide reads, in one-letter code: tRNA dimethylallyltransferase (307 aa).

10 to 17 (GPTAVGKT) provides a ligand contact to ATP. 12–17 (TAVGKT) is a binding site for substrate. Residues 35–38 (DSMQ) form an interaction with substrate tRNA region.

This sequence belongs to the IPP transferase family. Monomer. Mg(2+) serves as cofactor.

The enzyme catalyses adenosine(37) in tRNA + dimethylallyl diphosphate = N(6)-dimethylallyladenosine(37) in tRNA + diphosphate. In terms of biological role, catalyzes the transfer of a dimethylallyl group onto the adenine at position 37 in tRNAs that read codons beginning with uridine, leading to the formation of N6-(dimethylallyl)adenosine (i(6)A). The protein is tRNA dimethylallyltransferase of Ligilactobacillus salivarius (strain UCC118) (Lactobacillus salivarius).